The chain runs to 441 residues: ATP-dependent protease ATPase subunit HslU (441 aa).

ATP contacts are provided by residues Ile18, 60–65 (GVGKTE), Asp254, Glu319, and Arg391.

Belongs to the ClpX chaperone family. HslU subfamily. As to quaternary structure, a double ring-shaped homohexamer of HslV is capped on each side by a ring-shaped HslU homohexamer. The assembly of the HslU/HslV complex is dependent on binding of ATP.

It localises to the cytoplasm. Its function is as follows. ATPase subunit of a proteasome-like degradation complex; this subunit has chaperone activity. The binding of ATP and its subsequent hydrolysis by HslU are essential for unfolding of protein substrates subsequently hydrolyzed by HslV. HslU recognizes the N-terminal part of its protein substrates and unfolds these before they are guided to HslV for hydrolysis. The protein is ATP-dependent protease ATPase subunit HslU of Shewanella denitrificans (strain OS217 / ATCC BAA-1090 / DSM 15013).